The primary structure comprises 179 residues: Ribosome-recycling factor (179 aa).

It belongs to the RRF family.

It is found in the cytoplasm. Functionally, responsible for the release of ribosomes from messenger RNA at the termination of protein biosynthesis. May increase the efficiency of translation by recycling ribosomes from one round of translation to another. The sequence is that of Ribosome-recycling factor from Chlamydia trachomatis serovar A (strain ATCC VR-571B / DSM 19440 / HAR-13).